The sequence spans 441 residues: Ribosomal protein uS12 methylthiotransferase RimO (441 aa).

Residues 6–116 (PKVGFVSLGC…VMTAVHANLP (111 aa)) enclose the MTTase N-terminal domain. Cys15, Cys51, Cys80, Cys147, Cys151, and Cys154 together coordinate [4Fe-4S] cluster. The region spanning 133–370 (LTPQHYAYLK…MEVQESISAE (238 aa)) is the Radical SAM core domain. The region spanning 373 to 439 (RRKIGRIETV…GHDLWAAPPA (67 aa)) is the TRAM domain.

It belongs to the methylthiotransferase family. RimO subfamily. Requires [4Fe-4S] cluster as cofactor.

The protein resides in the cytoplasm. The enzyme catalyses L-aspartate(89)-[ribosomal protein uS12]-hydrogen + (sulfur carrier)-SH + AH2 + 2 S-adenosyl-L-methionine = 3-methylsulfanyl-L-aspartate(89)-[ribosomal protein uS12]-hydrogen + (sulfur carrier)-H + 5'-deoxyadenosine + L-methionine + A + S-adenosyl-L-homocysteine + 2 H(+). Catalyzes the methylthiolation of an aspartic acid residue of ribosomal protein uS12. The polypeptide is Ribosomal protein uS12 methylthiotransferase RimO (Methylobacillus flagellatus (strain ATCC 51484 / DSM 6875 / VKM B-1610 / KT)).